A 97-amino-acid polypeptide reads, in one-letter code: Late embryogenesis abundant protein Lea5 (97 aa).

Belongs to the LEA type 3 family.

The sequence is that of Late embryogenesis abundant protein Lea5 (LEA5) from Citrus sinensis (Sweet orange).